The following is an 824-amino-acid chain: A-adding tRNA nucleotidyltransferase (824 aa).

2 consecutive CBS domains span residues 305–363 and 367–423; these read MNTP…DEPI and VNRD…LEKL. 459–462 is an ATP binding site; that stretch reads GVVR. Asp-472 and Asp-474 together coordinate Mg(2+). Residues 545 to 546, Asn-550, 590 to 599, Arg-603, and Arg-632 each bind ATP; these read RD and DPVRILRALR.

It belongs to the tRNA nucleotidyltransferase/poly(A) polymerase family. Mg(2+) serves as cofactor.

The catalysed reaction is a tRNA with a 3' CC end + ATP = a tRNA with a 3' CCA end + diphosphate. Its function is as follows. tRNA nucleotidyltransferase involved in the synthesis of the tRNA CCA terminus. Adds the terminal adenosine residue to tRNA. Can incorporate CMP into tRNA ending with C74C75 (tRNACC), with very weak efficiency. The protein is A-adding tRNA nucleotidyltransferase of Aquifex aeolicus (strain VF5).